The sequence spans 491 residues: Cytochrome P450 2F1 (491 aa).

Position 436 (Cys-436) interacts with heme.

This sequence belongs to the cytochrome P450 family. Requires heme as cofactor. Expressed in lung. Rarely detected in liver and placenta.

Its subcellular location is the endoplasmic reticulum membrane. The protein resides in the microsome membrane. It catalyses the reaction an organic molecule + reduced [NADPH--hemoprotein reductase] + O2 = an alcohol + oxidized [NADPH--hemoprotein reductase] + H2O + H(+). Functionally, may be involved in the metabolism of various pneumotoxicants including naphthalene. Is able to dealkylate ethoxycoumarin, propoxycoumarin, and pentoxyresorufin but possesses no activity toward ethoxyresorufin and only trace dearylation activity toward benzyloxyresorufin. Bioactivates 3-methylindole (3MI) by dehydrogenation to the putative electrophile 3-methylene-indolenine. This Homo sapiens (Human) protein is Cytochrome P450 2F1 (CYP2F1).